The primary structure comprises 122 residues: NADH-quinone oxidoreductase subunit A (122 aa).

3 helical membrane-spanning segments follow: residues 10-30 (MIVL…LTLG), 66-86 (IFAL…PWAV), and 91-111 (LGLF…VGLA).

This sequence belongs to the complex I subunit 3 family. As to quaternary structure, NDH-1 is composed of 14 different subunits. Subunits NuoA, H, J, K, L, M, N constitute the membrane sector of the complex.

It localises to the cell membrane. The enzyme catalyses a quinone + NADH + 5 H(+)(in) = a quinol + NAD(+) + 4 H(+)(out). Its function is as follows. NDH-1 shuttles electrons from NADH, via FMN and iron-sulfur (Fe-S) centers, to quinones in the respiratory chain. The immediate electron acceptor for the enzyme in this species is believed to be a menaquinone. Couples the redox reaction to proton translocation (for every two electrons transferred, four hydrogen ions are translocated across the cytoplasmic membrane), and thus conserves the redox energy in a proton gradient. In Bacillus mycoides (strain KBAB4) (Bacillus weihenstephanensis), this protein is NADH-quinone oxidoreductase subunit A.